A 328-amino-acid chain; its full sequence is MSEKIYEYKDENNWFIGKMTGHNLISGWGVKHTTIKKIDDLLDGIAATLDWENPKGYDVSVVRYQSPLSLITFIIDMINQETQREIKVTPHAGTILLIENAKLLAVYLPEGGVSTATFFATSEQGFGDIILIATRNEGKTKEFRNLFGQLGYRVENLNDYPELPEVAETGTTFEENARLKAETISRLTGKMVLADDSGLKVDALGGLPGVWSARFSGPDATDAKNNTKLLHELAMVFDQKKRSAQFHTTLVVAAPNKDSLVMEAEWPGYIATQPKGENGFGYDPVFIVGETGRHAAELEADQKNQLSHRGQAVRKLMEVFPAWQAKQS.

A unknown region spans residues 1–129 (MSEKIYEYKD…ATSEQGFGDI (129 aa)). The NTP pyrophosphatase stretch occupies residues 130–324 (ILIATRNEGK…KLMEVFPAWQ (195 aa)). Position 134 to 139 (134 to 139 (TRNEGK)) interacts with substrate. The Proton acceptor role is filled by Asp196. Residue Asp196 coordinates Mg(2+). Residues Ser197, 280–283 (FGYD), Lys303, and 308–309 (HR) each bind substrate.

Belongs to the HAM1 NTPase family. Homodimer. Mg(2+) is required as a cofactor.

The catalysed reaction is XTP + H2O = XMP + diphosphate + H(+). The enzyme catalyses dITP + H2O = dIMP + diphosphate + H(+). It carries out the reaction ITP + H2O = IMP + diphosphate + H(+). In terms of biological role, pyrophosphatase that catalyzes the hydrolysis of nucleoside triphosphates to their monophosphate derivatives, with a high preference for the non-canonical purine nucleotides XTP (xanthosine triphosphate), dITP (deoxyinosine triphosphate) and ITP. Seems to function as a house-cleaning enzyme that removes non-canonical purine nucleotides from the nucleotide pool, thus preventing their incorporation into DNA/RNA and avoiding chromosomal lesions. The protein is dITP/XTP pyrophosphatase of Streptococcus pyogenes serotype M3 (strain ATCC BAA-595 / MGAS315).